The sequence spans 269 residues: MKI67 FHA domain-interacting nucleolar phosphoprotein (269 aa).

In terms of domain architecture, RRM spans 45 to 123 (GVLYVGHLPR…RIIKCHVIPP (79 aa)). Residues 234-269 (DEIVIKVKPLPENSDDVEESEEESAEEDEGEEEEAA) form a disordered region. Residues 246–269 (NSDDVEESEEESAEEDEGEEEEAA) show a composition bias toward acidic residues.

Its subcellular location is the nucleus. The protein localises to the nucleolus. Plays an essential role in early embryonic development. This Danio rerio (Zebrafish) protein is MKI67 FHA domain-interacting nucleolar phosphoprotein (nifk).